Here is a 285-residue protein sequence, read N- to C-terminus: Mitochondrial substrate carrier family protein L (285 aa).

The Mitochondrial intermembrane portion of the chain corresponds to methionine 1–asparagine 13. Solcar repeat units lie at residues lysine 8 to lysine 94, isoleucine 103 to tyrosine 185, and methionine 193 to phenylalanine 282. A helical transmembrane segment spans residues phenylalanine 14–leucine 34. Residues lysine 35–glycine 69 are Mitochondrial matrix-facing. The chain crosses the membrane as a helical span at residues valine 70–isoleucine 90. Residues valine 91–proline 102 are Mitochondrial intermembrane-facing. The chain crosses the membrane as a helical span at residues isoleucine 103–alanine 123. Residues cysteine 124–arginine 156 are Mitochondrial matrix-facing. The chain crosses the membrane as a helical span at residues glycine 157–glycine 177. The Mitochondrial intermembrane segment spans residues cysteine 178–serine 198. Residues phenylalanine 199 to isoleucine 219 traverse the membrane as a helical segment. Residues arginine 220–lysine 256 lie on the Mitochondrial matrix side of the membrane. Residues glycine 257–glutamate 277 form a helical membrane-spanning segment. Over cysteine 278–methionine 285 the chain is Mitochondrial intermembrane.

Belongs to the mitochondrial carrier (TC 2.A.29) family.

It is found in the mitochondrion inner membrane. In terms of biological role, mitochondrial solute carriers shuttle metabolites, nucleotides, and cofactors through the mitochondrial inner membrane. This Dictyostelium discoideum (Social amoeba) protein is Mitochondrial substrate carrier family protein L (mcfL).